Consider the following 138-residue polypeptide: Ribosome-binding factor A (138 aa).

Belongs to the RbfA family. Monomer. Binds 30S ribosomal subunits, but not 50S ribosomal subunits or 70S ribosomes.

The protein resides in the cytoplasm. Functionally, one of several proteins that assist in the late maturation steps of the functional core of the 30S ribosomal subunit. Associates with free 30S ribosomal subunits (but not with 30S subunits that are part of 70S ribosomes or polysomes). Required for efficient processing of 16S rRNA. May interact with the 5'-terminal helix region of 16S rRNA. The sequence is that of Ribosome-binding factor A from Sodalis glossinidius (strain morsitans).